The primary structure comprises 662 residues: High affinity sulfate transporter 2 (662 aa).

The disordered stretch occupies residues methionine 1–leucine 35. A run of 12 helical transmembrane segments spans residues glycine 103–alanine 123, leucine 128–glycine 148, isoleucine 153–isoleucine 173, leucine 182–cysteine 202, glycine 205–isoleucine 225, tryptophan 264–alanine 284, phenylalanine 291–isoleucine 311, alanine 346–glycine 366, methionine 383–glycine 403, valine 420–phenylalanine 440, valine 447–leucine 467, and glycine 481–isoleucine 501. The STAS domain occupies glutamine 532–tyrosine 655.

Belongs to the SLC26A/SulP transporter (TC 2.A.53) family.

Its subcellular location is the membrane. In terms of biological role, high-affinity H(+)/sulfate cotransporter that mediates the uptake of sulfate by plant roots from low concentrations of sulfate in the soil solution. The chain is High affinity sulfate transporter 2 (ST2) from Stylosanthes hamata (Caribbean stylo).